Reading from the N-terminus, the 562-residue chain is Calcium-dependent protein kinase 5 (562 aa).

Positions 118-372 (ELDKYKLGKG…VHKIVNHKWF (255 aa)) constitute a Protein kinase domain. ATP-binding positions include 124–132 (LGKGSYGNV) and Lys147. The active-site Proton acceptor is Asp238. The J domain autoinhibitory motif signature appears at 394–402 (KFKKFHKLC). Residues 394 to 429 (KFKKFHKLCKIKKLAITCIAYQLNKKKFGKMKKTFE) form a j domain region. A J domain EF-hand interaction motif motif is present at residues 403 to 412 (KIKKLAITCI). 4 consecutive EF-hand domains span residues 419–453 (KKFG…VGDN), 454–489 (EIDR…HSIL), 490–525 (EQDA…SNDQ), and 528–562 (FSKE…GRQS). Ca(2+)-binding residues include Asp432, Asn434, Asp436, Glu443, Asp467, Asp469, Asn471, Glu478, Asp503, Asn505, Asp507, Glu514, Asp541, Asn543, Asp545, Tyr547, and Glu552.

Belongs to the protein kinase superfamily. Ser/Thr protein kinase family. CDPK subfamily. Requires Mg(2+) as cofactor. In terms of processing, may be palmitoylated. Post-translationally, autophosphorylated in vitro.

It is found in the cytoplasm. It localises to the cytoplasmic vesicle. Its subcellular location is the secretory vesicle. The protein resides in the microneme membrane. The protein localises to the cell membrane. The enzyme catalyses L-seryl-[protein] + ATP = O-phospho-L-seryl-[protein] + ADP + H(+). The catalysed reaction is L-threonyl-[protein] + ATP = O-phospho-L-threonyl-[protein] + ADP + H(+). Its activity is regulated as follows. Activated by calcium. Upon calcium binding to the EF-hand domains, the C-terminus of the junction domain (J domain) undergoes a conformational change which results in the dissociation of the pseudo-substrate inhibitory motif from the catalytic domain. This, in turn, may facilitate the autophosphorylation of the activation loop at Thr-278, which leads to the kinase activation. In terms of biological role, calcium-dependent protein kinase which acts as a sensor and effector of intracellular Ca(2+) levels probably in part downstream of cGMP-activated PKG kinase. Plays a central role in host erythrocytes and hepatocytes infection cycles. During the liver stage, involved in sporozoite motility and thus in sporozoite invasion of host hepatocytes, probably together with CDPK1 and CDPK4. Involved in merosome egress from host hepatocytes, probably together with CDPK4. Required for the release of hepatic merozoites from merosomes in the host blood stream. During the asexual blood stage, required for merozoite egress from host erythrocytes by triggering microneme secretion. Phosphorylates transporter NPT1 at late schizont stage. In Plasmodium berghei (strain Anka), this protein is Calcium-dependent protein kinase 5.